The following is a 435-amino-acid chain: MSTGFFGDIQKVRYEGPESDNPLAFRHYNADEIVLGKRMEDHLRFAVAYWHSFAWEGGDPFGGRPFDRPWFSNEIDAAKLKADVAFEFFSLLGAPYYCFHDADVRPEGRNFAENTRYLNEIVDIFEKKQAETGMKLLWGTANLFSNRRYMAGAATNPDPDVFAFAAATVKTCIDATKRLGGENYVLWGGREGYETLLNTDLSRELDHMGRFLSLVVEYKHKIGFKGTILIEPKPQEPTKHQYDYDVATVYGFLKRYGLENEVKVNIEQGHAILAGHSFEHELALARTLGIFGSIDMNRNDYQSGWDTDQFPNNVPEMALAYYQVLLAGGFTTGGTNFDAKLRRQSLDPQDLLIGHIGGMDCCARGLKAAARMLEDGALSKPLDERYAGWNGEFGKRLLSGLSLDQIAGEVEAKDINPQPKSGRQEYLENIVNRYV.

Residues His100 and Asp103 contribute to the active site. Residues Glu231, Glu267, His270, Asp295, Asp306, Asp308, and Asp338 each contribute to the Mg(2+) site.

It belongs to the xylose isomerase family. In terms of assembly, homotetramer. It depends on Mg(2+) as a cofactor.

The protein localises to the cytoplasm. It catalyses the reaction alpha-D-xylose = alpha-D-xylulofuranose. This Brucella canis (strain ATCC 23365 / NCTC 10854 / RM-666) protein is Xylose isomerase.